Reading from the N-terminus, the 650-residue chain is Macrolide export ATP-binding/permease protein MacB (650 aa).

The ABC transporter domain occupies 9–248 (IELIDLERVF…RPLGRPPGGA (240 aa)). Residue 45–52 (GQSGSGKS) coordinates ATP. The next 4 helical transmembrane spans lie at 276–296 (ALTL…MAIG), 525–545 (LTLL…IGVM), 580–600 (AVAV…GAAL), and 615–635 (PPIV…YLPA).

Belongs to the ABC transporter superfamily. Macrolide exporter (TC 3.A.1.122) family. Homodimer.

The protein resides in the cell inner membrane. Non-canonical ABC transporter that contains transmembrane domains (TMD), which form a pore in the inner membrane, and an ATP-binding domain (NBD), which is responsible for energy generation. Confers resistance against macrolides. The polypeptide is Macrolide export ATP-binding/permease protein MacB (Rhodospirillum rubrum (strain ATCC 11170 / ATH 1.1.1 / DSM 467 / LMG 4362 / NCIMB 8255 / S1)).